A 288-amino-acid chain; its full sequence is Fibroblast growth factor 2 (288 aa).

Positions 1 to 133 are disordered; sequence MVGVGGGDVE…RGSRPGPAGT (133 aa). The propeptide at 1–142 is or 93, or 124, or 125, or 131, or 161; that stretch reads MVGVGGGDVE…TMAAGSITTL (142 aa). Over residues 52-64 the composition is skewed to low complexity; that stretch reads SVNPRSRAAGSPR. Positions 68-84 are enriched in basic and acidic residues; that stretch reads RRTEERPSGSRLGDRGR. Omega-N-methylarginine; alternate occurs at positions 108, 110, and 112. Residues Arg-108, Arg-110, and Arg-112 each carry the symmetric dimethylarginine; alternate modification. Residues 113-132 show a composition bias toward low complexity; the sequence is GTAAPRAAPAARGSRPGPAG. Asn-169 serves as a coordination point for heparin. The Cell attachment site; atypical motif lies at 179 to 181; that stretch reads DGR. Position 215 is a phosphotyrosine; by TEC (Tyr-215). The short motif at 221 to 223 is the Cell attachment site; atypical element; that stretch reads DGR. A Glycyl lysine isopeptide (Lys-Gly) (interchain with G-Cter in SUMO1) cross-link involves residue Lys-228. Positions 261–277 are heparin-binding; that stretch reads KRTGQYKLGSKTGPGQK.

The protein belongs to the heparin-binding growth factors family. In terms of assembly, monomer. Homodimer. Interacts with FGFR1, FGFR2, FGFR3 and FGFR4. Affinity between fibroblast growth factors (FGFs) and their receptors is increased by heparan sulfate glycosaminoglycans that function as coreceptors. Interacts with CSPG4, FGFBP1 and TEC. Found in a complex with FGFBP1, FGF1 and FGF2. Interacts with FGFBP3. Interacts with integrin ITGAV:ITGB3; the interaction is required for FGF2 signaling. Interacts with SNORC (via the extracellular domain). Interacts with glypican GPC3. In terms of processing, phosphorylation at Tyr-215 regulates FGF2 unconventional secretion. Several N-termini starting at positions 94, 125, 126, 132, 143 and 162 have been identified by direct sequencing. Expressed in granulosa and cumulus cells. Expressed in hepatocellular carcinoma cells, but not in non-cancerous liver tissue.

The protein localises to the secreted. It localises to the nucleus. Functionally, acts as a ligand for FGFR1, FGFR2, FGFR3 and FGFR4. Also acts as an integrin ligand which is required for FGF2 signaling. Binds to integrin ITGAV:ITGB3. Plays an important role in the regulation of cell survival, cell division, cell differentiation and cell migration. Functions as a potent mitogen in vitro. Can induce angiogenesis. Mediates phosphorylation of ERK1/2 and thereby promotes retinal lens fiber differentiation. This Homo sapiens (Human) protein is Fibroblast growth factor 2 (FGF2).